We begin with the raw amino-acid sequence, 66 residues long: Large ribosomal subunit protein bL35 (66 aa).

It belongs to the bacterial ribosomal protein bL35 family.

The chain is Large ribosomal subunit protein bL35 from Treponema denticola (strain ATCC 35405 / DSM 14222 / CIP 103919 / JCM 8153 / KCTC 15104).